The chain runs to 108 residues: Complement inhibitor CirpT4 (108 aa).

Residues 1–19 (MRAFVALFCTLVAFATVIC) form the signal peptide. 4 disulfides stabilise this stretch: Cys-40/Cys-64, Cys-59/Cys-98, Cys-76/Cys-99, and Cys-85/Cys-104.

The protein belongs to the CirpT family. In terms of tissue distribution, expressed in salivary glands.

The protein localises to the secreted. Its function is as follows. Complement inhibitor. Prevents complement-mediated activation of C5 by sterically preventing direct binding of C5 to its convertase (binding with domains MG4 and MG5). Binds C5 at a different binding site than the other tick complement inhibitors OmCI and RaCI3, and the drug eculizumab. Inhibits the complement in human, rat and guinea pig, and also shows a reduced inhibition in rabbit and pig. The polypeptide is Complement inhibitor CirpT4 (Amblyomma americanum (Lone star tick)).